We begin with the raw amino-acid sequence, 104 residues long: PE-PGRS family protein PE_PGRS60 (104 aa).

The PE domain maps to 1–60; the sequence is MSYVIAAPEALVAAATDLATLGSTIGAANAAAAGSTTALLTAGADEVSAAIAAYSECTAR. The tract at residues 64–104 is disordered; it reads HSVRGRRRSMSGSCRPWPQVGAPMRPPRPPASRRCRARSIC. Residues 94–104 are compositionally biased toward basic residues; sequence ASRRCRARSIC.

Belongs to the mycobacterial PE family. PGRS subfamily.

In terms of biological role, binds fibronectin. May contribute to pathogenicity. The chain is PE-PGRS family protein PE_PGRS60 from Mycobacterium tuberculosis (strain ATCC 25618 / H37Rv).